A 421-amino-acid polypeptide reads, in one-letter code: Gamma-glutamyl phosphate reductase (421 aa).

It belongs to the gamma-glutamyl phosphate reductase family.

The protein localises to the cytoplasm. It carries out the reaction L-glutamate 5-semialdehyde + phosphate + NADP(+) = L-glutamyl 5-phosphate + NADPH + H(+). It participates in amino-acid biosynthesis; L-proline biosynthesis; L-glutamate 5-semialdehyde from L-glutamate: step 2/2. Functionally, catalyzes the NADPH-dependent reduction of L-glutamate 5-phosphate into L-glutamate 5-semialdehyde and phosphate. The product spontaneously undergoes cyclization to form 1-pyrroline-5-carboxylate. This is Gamma-glutamyl phosphate reductase from Pseudomonas syringae pv. tomato (strain ATCC BAA-871 / DC3000).